A 458-amino-acid polypeptide reads, in one-letter code: Argininosuccinate lyase (458 aa).

Belongs to the lyase 1 family. Argininosuccinate lyase subfamily.

The protein localises to the cytoplasm. It carries out the reaction 2-(N(omega)-L-arginino)succinate = fumarate + L-arginine. Its pathway is amino-acid biosynthesis; L-arginine biosynthesis; L-arginine from L-ornithine and carbamoyl phosphate: step 3/3. The chain is Argininosuccinate lyase from Bacillus velezensis (strain DSM 23117 / BGSC 10A6 / LMG 26770 / FZB42) (Bacillus amyloliquefaciens subsp. plantarum).